The primary structure comprises 111 residues: Large ribosomal subunit protein P2 (111 aa).

Positions Ala63–Ala84 are enriched in low complexity. The disordered stretch occupies residues Ala63–Asp111. Residues Glu85 to Glu97 show a composition bias toward basic and acidic residues. Position 98 is a phosphoserine (Ser98).

As to quaternary structure, part of the ribosomal stalk of the large ribosomal subunit; P1 and P2 exist as dimers which assemble on the P0 scaffold.

Functionally, plays an important role in the elongation step of protein synthesis. This chain is Large ribosomal subunit protein P2, found in Artemia salina (Brine shrimp).